Reading from the N-terminus, the 139-residue chain is Probable disulfide formation protein C 1 (139 aa).

Residues 8–27 (EYALFTAWGASFIATLGSLY) traverse the membrane as a helical segment. An intrachain disulfide couples Cys37 to Cys40. The next 2 helical transmembrane spans lie at 42 to 61 (YQRI…VVKK) and 68 to 85 (YSLP…YHYV). Residues Cys99 and Cys104 are joined by a disulfide bond. The chain crosses the membrane as a helical span at residues 113 to 135 (GFVTIPFLALIGFITIAVCSFIV).

It belongs to the DsbB family. BdbC subfamily.

It localises to the cell membrane. Required for disulfide bond formation in some proteins. The protein is Probable disulfide formation protein C 1 (bdbC1) of Bacillus anthracis.